The sequence spans 183 residues: ADP-ribosylation factor-like protein 1 (183 aa).

G2 carries N-myristoyl glycine lipidation. GTP-binding positions include 25–32 (GLDGAGKT), 68–72 (DLGGQ), and 127–130 (NKQD).

It belongs to the small GTPase superfamily. Arf family. Homodimer. Interacts with IMH1 (via GRIP domain); the interaction is dependent on GTP. Interacts with MON2.

The protein resides in the golgi apparatus. Recruits golgins such as IMH1 to the Golgi. Can bind and hydrolyze GTP. May be involved in trafficking events within the endosomal system. This is ADP-ribosylation factor-like protein 1 (ARL1) from Saccharomyces cerevisiae (strain ATCC 204508 / S288c) (Baker's yeast).